The chain runs to 850 residues: AdoMet-dependent rRNA methyltransferase SPB1 (850 aa).

Residues G58, W60, D78, D94, and D119 each contribute to the S-adenosyl-L-methionine site. K159 acts as the Proton acceptor in catalysis. The span at 273-282 (GETNEMTWTP) shows a compositional bias: polar residues. 4 disordered regions span residues 273–305 (GETN…ARDE), 388–414 (IDKE…NEMK), 529–569 (GISD…RTLN), and 620–646 (AKKN…KQDD). Positions 388–400 (IDKELSELGEREK) are enriched in basic and acidic residues. A coiled-coil region spans residues 397 to 425 (EREKARKKRERRRRNEMKQREIQRMQMNM). Residues 401–411 (ARKKRERRRRN) are compositionally biased toward basic residues. Acidic residues-rich tracts occupy residues 537–561 (DESD…DEDD) and 628–638 (SDSEDEEDDIV). Residues 746–773 (LEAKGRKKMRALRRLEQMKKKSELINED) are a coiled coil. The segment at 811–850 (KNKGIAGRPRGVTGKYKMVDGTMKKEQRAIRRIKKKMGKK) is disordered. The segment covering 840 to 850 (IRRIKKKMGKK) has biased composition (basic residues).

It belongs to the class I-like SAM-binding methyltransferase superfamily. RNA methyltransferase RlmE family. SPB1 subfamily. In terms of assembly, component of the nucleolar and nucleoplasmic pre-60S ribosomal particle.

It is found in the nucleus. It localises to the nucleolus. The enzyme catalyses a ribonucleotide in rRNA + S-adenosyl-L-methionine = a 2'-O-methylribonucleotide in rRNA + S-adenosyl-L-homocysteine + H(+). In terms of biological role, required for proper assembly of pre-ribosomal particles during the biogenesis of the 60S ribosomal subunit. The polypeptide is AdoMet-dependent rRNA methyltransferase SPB1 (Yarrowia lipolytica (strain CLIB 122 / E 150) (Yeast)).